We begin with the raw amino-acid sequence, 459 residues long: Zinc finger protein 213 (459 aa).

The SCAN box domain maps to 45–126 (RQRFRQFCYG…VALVEDLQKQ (82 aa)). The tract at residues 128–188 (VKAWRQDVPS…ALLKEGRPGE (61 aa)) is disordered. A KRAB domain is found at 202 to 292 (VALGDIPFYF…ENRPRAALGP (91 aa)). C2H2-type zinc fingers lie at residues 317–339 (HSCG…QRTH), 345–367 (HKCP…QGVH), 373–395 (FSCS…QRIH), 401–423 (FGCS…RRVH), and 429–451 (FGCG…QSLH).

The protein belongs to the krueppel C2H2-type zinc-finger protein family. As to expression, widely expressed with highest levels in testis.

The protein resides in the nucleus. Functionally, may be involved in transcriptional regulation. The protein is Zinc finger protein 213 (ZNF213) of Homo sapiens (Human).